A 1091-amino-acid polypeptide reads, in one-letter code: LRR receptor-like serine/threonine-protein kinase RGI3 (1091 aa).

The signal sequence occupies residues 1–24 (MPPNIYRLSFFSSLLCFFFIPCFS). Residues 25–703 (LDQQGQALLS…TTRNSSVVRL (679 aa)) lie on the Extracellular side of the membrane. One copy of the LRR 1 repeat lies at 33–56 (LSWKSQLNISGDAFSSWHVADTSP). N-linked (GlcNAc...) asparagine glycosylation is present at asparagine 40. A disulfide bond links cysteine 57 and cysteine 64. LRR repeat units lie at residues 67-91 (RGEV…SLRS), 92-115 (LKSL…EIGD), 116-140 (FTEL…IFRL), 142-166 (KLKT…NLSG), 168-188 (VELM…IGEL), 190-213 (NLQV…IGNC), 214-237 (ENLV…IGNL), 239-261 (RVQT…IGYC), 262-285 (TELQ…IGGL), 287-309 (KLQS…LGNC), 311-332 (ELWL…SFGK), 333-357 (LENL…LTNC), 359-383 (KLTH…NLRS), 385-405 (TMFF…LSQC), 406-429 (RELQ…IFGL), 431-453 (NLTK…IGNC), 454-477 (TNLY…IGNL), 478-501 (KNLN…ISGC), 503-524 (SLEF…TTLP), 525-548 (KSLK…IGLL), 549-572 (TELT…ISTC), 574-596 (SLQL…LGQI), 598-620 (SLAI…RFSD), 621-644 (LKNL…LTDL), 645-668 (QNLV…PFFR), and 669-690 (RLPL…ISTR). Residue asparagine 104 is glycosylated (N-linked (GlcNAc...) asparagine). N-linked (GlcNAc...) asparagine glycosylation is present at asparagine 163. 5 short sequence motifs (small peptide recognition) span residues 173-174 (FD), 195-198 (RAGG), 218-223 (MLGLAE), tyrosine 246, and 268-270 (YLY). Short sequence motifs (small peptide recognition) lie at residues 316–319 (DFSE) and 338–340 (ELQ). Asparagine 356 carries N-linked (GlcNAc...) asparagine glycosylation. Short sequence motifs (small peptide recognition) lie at residues 386 to 390 (MFFAW) and 412 to 415 (DLSY). N-linked (GlcNAc...) asparagine glycosylation is present at asparagine 431. The Small peptide recognition motif lies at 434 to 438 (KLLLL). Asparagine 452 is a glycosylation site (N-linked (GlcNAc...) asparagine). Positions 458-460 (RLR) match the Small peptide recognition motif. A glycan (N-linked (GlcNAc...) asparagine) is linked at asparagine 604. Asparagine 651 is a glycosylation site (N-linked (GlcNAc...) asparagine). Residue asparagine 697 is glycosylated (N-linked (GlcNAc...) asparagine). The chain crosses the membrane as a helical span at residues 704–724 (TILILVVVTAVLVLMAVYTLV). At 725 to 1091 (RARAAGKQLL…CSFAFSDDSV (367 aa)) the chain is on the cytoplasmic side. The region spanning 760-1046 (LTSANVIGTG…MLTEIRHIDV (287 aa)) is the Protein kinase domain. Residues 766 to 774 (IGTGSSGVV) and lysine 788 each bind ATP. Phosphotyrosine is present on residues tyrosine 831 and tyrosine 870. Aspartate 883 (proton acceptor) is an active-site residue. Phosphotyrosine is present on tyrosine 933.

This sequence belongs to the protein kinase superfamily. Ser/Thr protein kinase family. As to quaternary structure, binds to RGF peptides such as RGF1, GLV5/CLEL1/RGF2, GLV7/CLEL3/RGF3, GLV3/RGF4, GLV10/CLEL7/RGF5 and RGF10/CLELN; these interactions trigger the formation of heterodimers with SERK1, SERK2 or BAK1/SERK3 via LRR regions. Phosphorylated and ubiquitinated upon interaction with RGF1, thus leading to activation a subsequent degradation. In terms of processing, autophosphorylated. As to expression, expressed in roots.

It localises to the cell membrane. It catalyses the reaction L-seryl-[protein] + ATP = O-phospho-L-seryl-[protein] + ADP + H(+). The catalysed reaction is L-threonyl-[protein] + ATP = O-phospho-L-threonyl-[protein] + ADP + H(+). In terms of biological role, together with RGI1, RGI2, RGI4 and RGI5, acts as a receptor of RGF peptides (e.g. RGF1, GLV5/CLEL1/RGF2, GLV7/CLEL3/RGF3, GLV3/RGF4, GLV10/CLEL7/RGF5 and RGF10/CLELN), peptide hormones which maintain the postembryonic root stem cell niche by regulating the expression levels and patterns of the transcription factor PLETHORA (PLT, e.g. PLT1 and PLT2). Links RGF peptides signal with their downstream components. The protein is LRR receptor-like serine/threonine-protein kinase RGI3 of Arabidopsis thaliana (Mouse-ear cress).